A 491-amino-acid chain; its full sequence is UDP-N-acetylmuramate--L-alanine ligase (491 aa).

ATP is bound at residue 126-132 (GTHGKTT).

It belongs to the MurCDEF family.

The protein localises to the cytoplasm. The enzyme catalyses UDP-N-acetyl-alpha-D-muramate + L-alanine + ATP = UDP-N-acetyl-alpha-D-muramoyl-L-alanine + ADP + phosphate + H(+). The protein operates within cell wall biogenesis; peptidoglycan biosynthesis. Functionally, cell wall formation. The sequence is that of UDP-N-acetylmuramate--L-alanine ligase from Shigella sonnei (strain Ss046).